A 655-amino-acid chain; its full sequence is A-type voltage-gated potassium channel KCND3 (655 aa).

The Cytoplasmic segment spans residues 1–182; sequence MAAGVAAWLP…FENPHTSTLA (182 aa). The interaction with KCNIP1 and KCNIP2 stretch occupies residues 6–21; sequence AAWLPFARAAAIGWMP. The interval 70–78 is interaction with KCNIP1; that stretch reads EKEFFFNED. Residues histidine 104, cysteine 110, cysteine 131, and cysteine 132 each contribute to the Zn(2+) site. Phosphoserine is present on serine 153. Residues 183–204 form a helical membrane-spanning segment; the sequence is LVFYYVTGFFIAVSVITNVVET. Over 205–223 the chain is Extracellular; it reads VPCGTVPGSKELPCGERYS. Residues 224–246 form a helical membrane-spanning segment; sequence VAFFCLDTACVMIFTVEYLLRLF. At 247–253 the chain is on the cytoplasmic side; that stretch reads AAPSRYR. The helical transmembrane segment at 254–277 threads the bilayer; that stretch reads FIRSVMSIIDVVAIMPYYIGLVMT. The Extracellular segment spans residues 278-283; it reads NNEDVS. Residues 284–306 traverse the membrane as a helical; Voltage-sensor segment; that stretch reads GAFVTLRVFRVFRIFKFSRHSQG. Over 307 to 318 the chain is Cytoplasmic; the sequence is LRILGYTLKSCA. The chain crosses the membrane as a helical span at residues 319-343; it reads SELGFLLFSLTMAIIIFATVMFYAE. Over 344–352 the chain is Extracellular; the sequence is KGSSASKFT. An intramembrane region (helical) is located at residues 353-366; the sequence is SIPASFWYTIVTMT. Residues threonine 367, leucine 368, glycine 369, and tyrosine 370 each contribute to the K(+) site. The Selectivity filter signature appears at 367 to 372; that stretch reads TLGYGD. An intramembrane segment occupies 367–374; the sequence is TLGYGDMV. A helical membrane pass occupies residues 378–400; sequence IAGKIFGSICSLSGVLVIALPVP. The Cytoplasmic portion of the chain corresponds to 401-655; sequence VIVSNFSRIY…ASNVVKVSVL (255 aa). A Phosphothreonine modification is found at threonine 459. The interaction with KCNIP1 and KCNIP2 stretch occupies residues 470–487; the sequence is SLIESQHHHLLHCLEKTT. Residues 472 to 487 are mediates dendritic targeting; it reads IESQHHHLLHCLEKTT. Position 569 is a phosphoserine; by CaMK2D (serine 569). Residue serine 585 is modified to Phosphoserine. Residues 618-644 form a disordered region; that stretch reads PAPPALTPEGETRPPPASPGPNTNIPS.

This sequence belongs to the potassium channel family. D (Shal) (TC 1.A.1.2) subfamily. Kv4.3/KCND3 sub-subfamily. Homotetramer. Heterotetramer with KCND2. Associates with the regulatory subunits KCNIP3 and KCNIP4. Interacts with KCNE1, KCNE2, SCN1B and KCNAB1 and DLG1. Component of heteromultimeric potassium channels. Identified in potassium channel complexes containing KCND1, KCND2, KCND3, KCNIP1, KCNIP2, KCNIP3, KCNIP4, DPP6 and DPP10. Interacts with KCNIP1; each KCNIP1 monomer interacts with two adjacent KCND3 subunits, through both the N-terminal inactivation ball of a KCND3 subunit and a C-terminal helix from the adjacent KCND3 subunit, clamping them together; this interaction stabilizes the tetrameric form and modulates the channel gating kinetics namely channel activation and inactivation kinetics and rate of recovery from inactivation. Interacts with DPP6; this interaction modulates the channel gating kinetics namely channel activation and inactivation kinetics and rate of recovery from inactivation. Interacts with KCNIP2; each KCNIP2 monomer interacts with two adjacent KCND3 subunits, through both the N-terminal inactivation ball of a KCND3 subunit and a C-terminal helix from the adjacent KCND3 subunit, clamping them together; this interaction modulates the channel gating kinetics. In terms of processing, regulated through phosphorylation at Ser-569 by CaMK2D. As to expression, detected in carotid body chemoreceptor cells and in frontal cortex.

The protein resides in the cell membrane. It is found in the sarcolemma. It localises to the cell projection. The protein localises to the dendrite. The enzyme catalyses K(+)(in) = K(+)(out). Functionally, pore-forming (alpha) subunit of voltage-gated A-type potassium channels that mediates transmembrane potassium transport in excitable membranes, in brain and heart. In cardiomyocytes, may generate the transient outward potassium current I(To). In neurons, may conduct the transient subthreshold somatodendritic A-type potassium current (ISA). Kinetics properties are characterized by fast activation at subthreshold membrane potentials, rapid inactivation, and quick recovery from inactivation. Channel properties are modulated by interactions with regulatory subunits. Interaction with the regulatory subunits KCNIP1 or KCNIP2 modulates the channel gating kinetics namely channel activation and inactivation kinetics and rate of recovery from inactivation. Likewise, interaction with DPP6 modulates the channel gating kinetics namely channel activation and inactivation kinetics. The sequence is that of A-type voltage-gated potassium channel KCND3 from Oryctolagus cuniculus (Rabbit).